Here is a 139-residue protein sequence, read N- to C-terminus: Putative pre-16S rRNA nuclease (139 aa).

Belongs to the YqgF nuclease family.

The protein resides in the cytoplasm. Could be a nuclease involved in processing of the 5'-end of pre-16S rRNA. This chain is Putative pre-16S rRNA nuclease, found in Streptococcus pneumoniae serotype 19F (strain G54).